Reading from the N-terminus, the 337-residue chain is Mortality factor related protein 1 (337 aa).

The 49-residue stretch at 7 to 55 folds into the Tudor-knot domain; the sequence is FEVGENVACIYKGKPYDAKITDIKTNSDGKELYCVHFKGWNNRYDEKIP. The segment at 75 to 113 is disordered; sequence HNAELPTTALKPKKKSLAAEAPRDDRDDTPGTSKGKKAK. The region spanning 122–327 is the MRG domain; the sequence is TADDMKVELP…ASNDYYRRSL (206 aa).

In terms of assembly, component of the SIN3S complex, which contains at least sin-3, hda-1, athp-1 and mrg-1. Interacts with cfp-1, a component of the SET2 complex. Interacts with rfp-1. As to expression, expressed in oocytes (at protein level). Expressed mainly in germ cells, but also at lower levels in several somatic cell types, including intestinal cells.

Its subcellular location is the nucleus. It is found in the chromosome. In terms of biological role, protein involved in the remodeling of chromatin thereby regulating various processes including transcription, chromosome synapsis and genome integrity. Mainly binds genomic loci carrying trimethylated histone H3 'Lys-36' (H3K36me3) or 'Lys-4' (H3K4me3), and acetylated histone H3 'Lys-9' (H3K9ac), 'Lys-27' (H3K27ac). During meiosis, required for the presynaptic pairing of homologous chromosomal regions outside of the pairing center and for the progression of chromosome synapsis. Essential maternal factor required in postembryonic germline development and in maintaining germ cell identity. Plays an important role in maintaining genomic integrity in primordial germ cells (PGCs) during meiosis by regulating DNA double-strand break (DSB) repair and synapsis. Also, required for chromatin-based transcriptional silencing in PGCs and for silencing of X-linked genes in the maternal germ line. By retaining histone acetyltransferase, cbp-1, in euchromatin, promotes the anchoring of heterochromatin at the inner nuclear membrane in intestinal and hypodermal cells. The protein is Mortality factor related protein 1 of Caenorhabditis elegans.